Here is a 496-residue protein sequence, read N- to C-terminus: L-arabinose isomerase (496 aa).

Residues E302, E329, H346, and H445 each coordinate Mn(2+).

The protein belongs to the arabinose isomerase family. It depends on Mn(2+) as a cofactor.

It catalyses the reaction beta-L-arabinopyranose = L-ribulose. It functions in the pathway carbohydrate degradation; L-arabinose degradation via L-ribulose; D-xylulose 5-phosphate from L-arabinose (bacterial route): step 1/3. Its function is as follows. Catalyzes the conversion of L-arabinose to L-ribulose. This is L-arabinose isomerase from Thermotoga sp. (strain RQ2).